Here is a 320-residue protein sequence, read N- to C-terminus: MTAVQWRSHLTDDQQRQVRDLVTAATQVDGVAPVGEQVLRELAQQRTEHLLVEDQSPGKSAIGYLNLSPAHGADAAMAELVVHPQARRRGIATAMVRAALAKTGGRNQFWAHGTLAPAQATASALGLTPVRELVQMRRSLRQLPEPVIPNGLQIRTYAGTEDDAELLRVNNAAFAYHPEQGGWTEADLAERRGEPWFDPAGLFLALEGSEGAEDSPRGQPRLLGFHWTKIHLDDPGLGEVYVLGVDPAAQGRGLGRTLTMIGLRSLAQRLGDRDLGRESTVMLYVESDNIAAVRTYQGLGFSTHSVDTAYALAAPDAALA.

N-acetyltransferase domains follow at residues 16-141 (RQVR…RSLR) and 152-320 (LQIR…AALA). Glutamate 36 provides a ligand contact to 1D-myo-inositol 2-(L-cysteinylamino)-2-deoxy-alpha-D-glucopyranoside. Acetyl-CoA contacts are provided by residues 80-82 (LVV) and 88-93 (RRGIAT). 1D-myo-inositol 2-(L-cysteinylamino)-2-deoxy-alpha-D-glucopyranoside-binding residues include glutamate 179, lysine 229, and glutamate 239. Acetyl-CoA is bound by residues 243–245 (LGV) and 250–256 (QGRGLGR). Tyrosine 284 serves as a coordination point for 1D-myo-inositol 2-(L-cysteinylamino)-2-deoxy-alpha-D-glucopyranoside. 289–294 (NIAAVR) contacts acetyl-CoA.

The protein belongs to the acetyltransferase family. MshD subfamily. In terms of assembly, monomer.

It catalyses the reaction 1D-myo-inositol 2-(L-cysteinylamino)-2-deoxy-alpha-D-glucopyranoside + acetyl-CoA = mycothiol + CoA + H(+). Catalyzes the transfer of acetyl from acetyl-CoA to desacetylmycothiol (Cys-GlcN-Ins) to form mycothiol. The protein is Mycothiol acetyltransferase of Mycobacterium marinum (strain ATCC BAA-535 / M).